A 96-amino-acid polypeptide reads, in one-letter code: MLVKVSIHGQEYDLEVQPTDKIQEIKSKINELNGTPVEQIHPYIAGHAMKDGTTISDYPQIVEGSKIQVRVILKSQSDNSEKSEKSGKSEKDCILM.

The tract at residues 75 to 96 (SQSDNSEKSEKSGKSEKDCILM) is disordered. Basic and acidic residues predominate over residues 79-96 (NSEKSEKSGKSEKDCILM).

The protein belongs to the ubiquitin family.

In Dictyostelium discoideum (Social amoeba), this protein is Ubiquitin-like protein NEDD8-like protein 1 (nedd8l1).